The primary structure comprises 526 residues: MNVLSAALTEAMTTSSADLVVFEPETRTWHRHPWGQVHLRAQNVAERIGQDGSSAVGIVGEPTVEGVAAILGALLAGSAVSILPGLVRGADPDQWADSTLNRFANIGVTTVFSHGSYLEQLRTRDSSLVIHDDAEVAHAQRSTTLELGAPLGEFAVLQGTAGSTGTPRTAQLRPDAVLANLRGLAERVGLAGSDIGCSWLPLYHDMGLTFLLSAAVGGTETWQAPTTAFASAPFSWVHWLTESRATLTAAPNMAYGLIGKYSRRLTDVDLSAMRFALNGGEPVDIDGTARFGTELSRFGFDPGALSPSYGLAESSCAVTVPVPGVGLKVDEITVTTEAGSSTQKLAVLGHAIAGMEVRLQPGDEDAGVVDREVGEVEIRGTSMMSGYRGEAPLDPGEWFPTGDLGYLTDDGLVICGRKKELITVAGRNIFPTEIERIAARVKGVREGAVVAVGTNERAVRPGLVIAAEFRGPDEAGARSEVVQRVASECGVVPADVVFLAPGSLPRTSSGKLRRLEVKRQLEESKG.

N6-acetyllysine; by Pat is present on residues Lys-260 and Lys-511.

It belongs to the ATP-dependent AMP-binding enzyme family. Post-translationally, acetylated on Lys-511 and Lys-260 by Pat. Lys-511 is the major acetylation site. Acetylation results in the inactivation of the enzyme.

It catalyses the reaction a long-chain fatty acid + holo-[ACP] + ATP = a long-chain fatty acyl-[ACP] + AMP + diphosphate. It carries out the reaction a medium-chain fatty acid + holo-[ACP] + ATP = a medium-chain fatty acyl-[ACP] + AMP + diphosphate. The catalysed reaction is hexadecanoate + holo-[ACP] + ATP = hexadecanoyl-[ACP] + AMP + diphosphate. The enzyme catalyses hexadecanoate + ATP + H(+) = hexadecanoyl-AMP + diphosphate. It catalyses the reaction hexadecanoyl-AMP + holo-[ACP] = hexadecanoyl-[ACP] + AMP + H(+). It carries out the reaction dodecanoate + holo-[ACP] + ATP = dodecanoyl-[ACP] + AMP + diphosphate. The catalysed reaction is dodecanoate + ATP + H(+) = dodecanoyl-AMP + diphosphate. The enzyme catalyses dodecanoyl-AMP + holo-[ACP] = dodecanoyl-[ACP] + AMP + H(+). The protein operates within siderophore biosynthesis; mycobactin biosynthesis. Reversibly inactivated by post-translational acetylation by Pat in a cAMP-dependent manner and reactivated by Sir2 deacylase. Functionally, activates lipidic moieties required for mycobactin biosynthesis. Converts medium- to long-chain aliphatic fatty acids into acyl adenylate, which is further transferred on to the phosphopantetheine arm of the carrier protein MbtL. Shows a strong preference for palmitic acid (C16) and cannot use short-chain fatty acids. Proceeds via a Bi Uni Uni Bi ping-pong mechanism. During the first half-reaction (adenylation), fatty acid binds first to the free enzyme, followed by ATP and the release of pyrophosphate to form the adenylate intermediate. During the second half-reaction (ligation), holo-MbtL binds to the enzyme followed by the release of products AMP and acylated MbtL. This is Medium/long-chain-fatty-acid--[acyl-carrier-protein] ligase MbtM from Mycolicibacterium smegmatis (strain ATCC 700084 / mc(2)155) (Mycobacterium smegmatis).